The chain runs to 381 residues: Probable G-protein coupled receptor 34 (381 aa).

The Extracellular segment spans residues 1-61 (MRSHTITMTT…LLSTVLTTSY (61 aa)). N28, N36, and N42 each carry an N-linked (GlcNAc...) asparagine glycan. Residues 62–82 (SVIFIVGLVGNIIALYVFLGI) traverse the membrane as a helical segment. The Cytoplasmic segment spans residues 83-88 (HRKRNS). A helical membrane pass occupies residues 89–109 (IQIYLLNVAIADLLLIFCLPF). At 110-128 (RIMYHINQNKWTLGVILCK) the chain is on the extracellular side. C127 and C204 are oxidised to a cystine. Residues 129 to 149 (VVGTLFYMNMYISIILLGFIS) traverse the membrane as a helical segment. Over 150-171 (LDRYIKINRSIQQRKAITTKQS) the chain is Cytoplasmic. Residues 172–192 (IYVCCIVWMLALGGFLTMIIL) form a helical membrane-spanning segment. Residues 193–216 (TLKKGGHNSTMCFHYRDKHNAKGE) lie on the Extracellular side of the membrane. The N-linked (GlcNAc...) asparagine glycan is linked to N200. A helical transmembrane segment spans residues 217 to 237 (AIFNFILVVMFWLIFLLIILS). At 238–269 (YIKIGKNLLRISKRRSKFPNSGKYATTARNSF) the chain is on the cytoplasmic side. A helical membrane pass occupies residues 270 to 290 (IVLIIFTICFVPYHAFRFIYI). Residues 291–310 (SSQLNVSSCYWKEIVHKTNE) lie on the Extracellular side of the membrane. A glycan (N-linked (GlcNAc...) asparagine) is linked at N295. Residues 311 to 331 (IMLVLSSFNSCLDPVMYFLMS) traverse the membrane as a helical segment. Residues 332–381 (SNIRKIMCQLLFRRFQGEPSRSESTSEFKPGYSLHDTSVAVKIQSSSKST) are Cytoplasmic-facing.

This sequence belongs to the G-protein coupled receptor 1 family.

It is found in the cell membrane. G-protein-coupled receptor of lysophosphatidylserine (LysoPS) that plays different roles in immune response. Acts a damage-sensing receptor that triggers tissue repair upon recognition of dying neutrophils. Mechanistically, apoptotic neutrophils release lysophosphatydilserine that are recognized by type 3 innate lymphoid cells (ILC3s) via GPR34, which activates downstream PI3K-AKT and RAS-ERK signaling pathways leading to STAT3 activation and IL-22 production. Plays an important role in microglial function, controlling morphology and phagocytosis. This chain is Probable G-protein coupled receptor 34 (GPR34), found in Gorilla gorilla gorilla (Western lowland gorilla).